A 73-amino-acid polypeptide reads, in one-letter code: uncharacterized protein (73 aa).

Positions 1-22 (MKILGVTGFILICLLAISVLMD) are cleaved as a signal peptide. A helical membrane pass occupies residues 44-66 (TFAEWVVLLFFVLVLVREMYVIY).

The protein localises to the membrane. This is an uncharacterized protein from Bacillus subtilis (strain 168).